We begin with the raw amino-acid sequence, 376 residues long: Fibromodulin (376 aa).

The signal sequence occupies residues 1 to 18; that stretch reads MQWTSLLLLAGLFSLSQA. Residue glutamine 19 is modified to Pyrrolidone carboxylic acid. Sulfotyrosine is present on residues tyrosine 20, tyrosine 38, tyrosine 39, tyrosine 45, tyrosine 47, tyrosine 53, and tyrosine 55. Residues 67–105 form the LRRNT domain; that stretch reads SPSPPDPRDCPQECDCPPNFPTAMYCDNRNLKYLPFVPS. 8 LRR repeats span residues 106–127, 130–151, 156–176, 177–198, 201–222, 224–245, 246–266, and 269–289; these read RMKYVYFQNNQITSIQEGVFDN, GLLWIALHGNQITSDKVGRKVF, HLERLYLDHNNLTRMPGPLPR, SLRELHLDHNQISRVPNNALEG, NLTALYLQHNEIQEVGSSMRGL, SLILLDLSYNHLRKVPDGLPSA, LEQLYMEHNNVYTVPDSYFRG, and KLLYVRLSHNSLTNNGLASNT. A glycan (N-linked (GlcNAc...) (keratan sulfate) asparagine) is linked at asparagine 127. Asparagine 166 carries N-linked (GlcNAc...) (keratan sulfate) asparagine glycosylation. Asparagine 201 is a glycosylation site (N-linked (GlcNAc...) (keratan sulfate) asparagine). Asparagine 291 is a glycosylation site (N-linked (GlcNAc...) (keratan sulfate) asparagine). LRR repeat units lie at residues 294–315 and 316–335; these read SLLELDLSYNQLQKIPPVNTNL and ENLYLQGNRINEFSISSFCT. A disulfide bridge connects residues cysteine 334 and cysteine 367. A glycan (N-linked (GlcNAc...) asparagine) is linked at asparagine 341. The stretch at 344–365 is one LRR 11 repeat; that stretch reads KLQVLRLDGNEIKRSAMPADAP.

This sequence belongs to the small leucine-rich proteoglycan (SLRP) family. SLRP class II subfamily. Binds to type I and type II collagen. In terms of processing, binds keratan sulfate chains.

It localises to the secreted. It is found in the extracellular space. The protein localises to the extracellular matrix. Functionally, affects the rate of fibrils formation. May have a primary role in collagen fibrillogenesis. The protein is Fibromodulin (FMOD) of Homo sapiens (Human).